A 185-amino-acid chain; its full sequence is Elongation factor P (185 aa).

The protein belongs to the elongation factor P family.

The protein localises to the cytoplasm. It participates in protein biosynthesis; polypeptide chain elongation. In terms of biological role, involved in peptide bond synthesis. Stimulates efficient translation and peptide-bond synthesis on native or reconstituted 70S ribosomes in vitro. Probably functions indirectly by altering the affinity of the ribosome for aminoacyl-tRNA, thus increasing their reactivity as acceptors for peptidyl transferase. In Salinispora arenicola (strain CNS-205), this protein is Elongation factor P.